The primary structure comprises 442 residues: Ribosome biogenesis protein NOP53 (442 aa).

Positions 242-264 (KPSSNTNLKKIEDKTPRQAQKSV) are disordered.

The protein belongs to the NOP53 family.

It is found in the nucleus. Its subcellular location is the nucleolus. The protein localises to the nucleoplasm. May play a role in ribosome biogenesis. The protein is Ribosome biogenesis protein NOP53 of Arabidopsis thaliana (Mouse-ear cress).